The sequence spans 556 residues: Guard cell S-type anion channel SLAC1 (556 aa).

The disordered stretch occupies residues 1–103 (MERKQSNAHS…GIINGGDGRK (103 aa)). At 1-189 (MERKQSNAHS…EQWPFLLRFP (189 aa)) the chain is on the cytoplasmic side. Positions 10 to 36 (STFADINEVEDEAEQELQQQENNNNKR) form a coiled coil. Positions 25–34 (ELQQQENNNN) are enriched in low complexity. S59 bears the Phosphoserine; by SRK2E mark. A compositionally biased stretch (basic and acidic residues) spans 69–79 (RESRERDDKKS). A phosphoserine; by SRK2E mark is found at S86, S113, and S120. Over residues 86 to 99 (SFGGFESGGIINGG) the composition is skewed to gly residues. At S146 the chain carries Phosphoserine. A helical membrane pass occupies residues 190-210 (IGCFGICLGLSSQAVLWLALA). Over 211–216 (KSPATN) the chain is Extracellular. A helical transmembrane segment spans residues 217–237 (FLHITPLINLVVWLFSLVVLV). The Cytoplasmic segment spans residues 238–265 (SVSFTYILKCIFYFEAVKREYFHPVRVN). Residues 266-286 (FFFAPWVVCMFLAISVPPMFS) form a helical membrane-spanning segment. Residues 287-295 (PNRKYLHPA) are Extracellular-facing. A helical membrane pass occupies residues 296-316 (IWCVFMGPYFFLELKIYGQWL). Over 317-325 (SGGKRRLCK) the chain is Cytoplasmic. The helical transmembrane segment at 326–346 (VANPSSHLSVVGNFVGAILAS) threads the bilayer. Residues 347 to 352 (KVGWDE) lie on the Extracellular side of the membrane. Residues 353–373 (VAKFLWAVGFAHYLVVFVTLY) form a helical membrane-spanning segment. The Cytoplasmic portion of the chain corresponds to 374–388 (QRLPTSEALPKELHP). A helical transmembrane segment spans residues 389 to 409 (VYSMFIAAPSAASIAWNTIYG). At 410–418 (QFDGCSRTC) the chain is on the extracellular side. Residues 419–439 (FFIALFLYISLVARINFFTGF) traverse the membrane as a helical segment. K440 is a topological domain (cytoplasmic). Residues 441 to 463 (FSVAWWSYTFPMTTASVATIKYA) traverse the membrane as a helical segment. The Extracellular portion of the chain corresponds to 464–479 (EAVPGYPSRALALTLS). Residues 480–500 (FISTAMVCVLFVSTLLHAFVW) traverse the membrane as a helical segment. Residues 501–556 (QTLFPNDLAIAITKRKLTREKKPFKRAYDLKRWTKQALAKKISAEKDFEAEEESHH) are Cytoplasmic-facing.

The protein belongs to the SLAC1 S-type anion channel family. As to quaternary structure, homotrimer. Interacts with SRK2E, CPK6, CPK21, CPK23 and PP2CA. The channel is inactivated upon PP2CA and ABI1 binding. Interacts with KAT1, KAT2, KAT3/KC1 and AKT2. Interacts with GHR1. Phosphorylation by SRK2E, especially on Ser-120, activates the channel. Also phosphorylated and activated by CPK21 and CPK23. Abscisic acid (ABA) promotes phosphorylation. This phosphorylation is inhibited by ABI1. Phosphorylated and activated by GHR1; this phosphorylation is repressed by ABI2 but not ABI1. Phosphorylated by HT1 on N-terminus but not C-terminus. In terms of tissue distribution, preferentially expressed in guard cells. Also detected in the vascular strands close to the leaf margins.

It is found in the cell membrane. Its activity is regulated as follows. Activated by GHR1-mediated phosphorylation which is negatively regulated by ABI2 but not ABI1. Activation by SRK2E/OST1 and GHR1 is repressed by HT1. Slow, weak voltage-dependent S-type anion efflux channel involved in maintenance of anion homeostasis. Cl(-) efflux through SLAC1 causes membrane depolarization, which activates outward-rectifying K1 channels, leading to KCl and water efflux to reduce turgor further and cause stomatal closure, that reduces water loss and promotes leaf turgor. Essential for stomatal closure in response to CO(2), abscisic acid (ABA), ozone O(3), light/dark transitions, humidity change, calcium ions, hydrogen peroxide H(2)O(2), reactive oxygen species (ROS), and nitric oxide. Binds to the highly selective inward-rectifying potassium channels KAT1 and AKT2, and inhibits their activities. Functions as an essential negative regulator of inward potassium channels in guard cells. Essential for the efficient stomatal closure and opening in guard cells. Involved in the local and/or systemic stomatal responses (e.g. stomatal closure) to light stress. The protein is Guard cell S-type anion channel SLAC1 of Arabidopsis thaliana (Mouse-ear cress).